The following is a 513-amino-acid chain: ATP synthase subunit alpha (513 aa).

G169–T176 serves as a coordination point for ATP.

Belongs to the ATPase alpha/beta chains family. As to quaternary structure, F-type ATPases have 2 components, CF(1) - the catalytic core - and CF(0) - the membrane proton channel. CF(1) has five subunits: alpha(3), beta(3), gamma(1), delta(1), epsilon(1). CF(0) has three main subunits: a(1), b(2) and c(9-12). The alpha and beta chains form an alternating ring which encloses part of the gamma chain. CF(1) is attached to CF(0) by a central stalk formed by the gamma and epsilon chains, while a peripheral stalk is formed by the delta and b chains.

It localises to the cell inner membrane. The enzyme catalyses ATP + H2O + 4 H(+)(in) = ADP + phosphate + 5 H(+)(out). Its function is as follows. Produces ATP from ADP in the presence of a proton gradient across the membrane. The alpha chain is a regulatory subunit. This chain is ATP synthase subunit alpha, found in Actinobacillus succinogenes (strain ATCC 55618 / DSM 22257 / CCUG 43843 / 130Z).